Here is a 215-residue protein sequence, read N- to C-terminus: LysM and putative peptidoglycan-binding domain-containing protein 2 (215 aa).

Residues 1–40 (MADLSPAPALREGGPRAHRPSAPSPPPRSRSTSEPEEAEL) are disordered. A2 carries the N-acetylalanine modification. A phosphoserine mark is found at S5, S24, S33, and S57. The region spanning 71-115 (VEHRVRAGDTLQGIALKYGVTMEQIKRANKLFTNDCIFLKKTLSI) is the LysM domain. Disordered regions lie at residues 135–176 (ESET…EVSA) and 195–215 (RKLK…LYHS). Residues 145–156 (QEEEPVVSEEEL) are compositionally biased toward acidic residues. Residues 157–169 (PPPSPQDPDPKPA) show a composition bias toward pro residues. The segment covering 196–205 (KLKEESRDEE) has biased composition (basic and acidic residues).

This Mus musculus (Mouse) protein is LysM and putative peptidoglycan-binding domain-containing protein 2 (Lysmd2).